Reading from the N-terminus, the 261-residue chain is Cytochrome c oxidase subunit 3 (261 aa).

Residues 1 to 15 (MTHQTHAYHMVNPSP) lie on the Mitochondrial matrix side of the membrane. Residues 16–34 (WPLTGALSALLMTSGLTMW) form a helical membrane-spanning segment. Residues 35-40 (FHYNST) are Mitochondrial intermembrane-facing. The helical transmembrane segment at 41-66 (ILLMLGLTTNMLTMYQWWRDIIREST) threads the bilayer. At 67-72 (FQGHHT) the chain is on the mitochondrial matrix side. A helical transmembrane segment spans residues 73–105 (PTVQKGLRYGMILFIISEVLFFTGFFWAFYHSS). Residues 106 to 128 (LAPTPELGGCWPPTGIHPLNPLE) are Mitochondrial intermembrane-facing. The helical transmembrane segment at 129–152 (VPLLNTSVLLASGVSITWAHHSLM) threads the bilayer. At 153-155 (EGD) the chain is on the mitochondrial matrix side. Residues 156–183 (RNHMLQALFITIALGIYFTLLQASEYYE) form a helical membrane-spanning segment. Over 184–190 (APFTISD) the chain is Mitochondrial intermembrane. The helical transmembrane segment at 191 to 223 (GVYGSTFFVATGFHGLHVIIGSTFLIVCFFRQL) threads the bilayer. Residues 224–232 (KFHFTSSHH) are Mitochondrial matrix-facing. A helical transmembrane segment spans residues 233–256 (FGFEAAAWYWHFVDVVWLFLYVSI). The Mitochondrial intermembrane portion of the chain corresponds to 257-261 (YWWGS).

It belongs to the cytochrome c oxidase subunit 3 family. As to quaternary structure, component of the cytochrome c oxidase (complex IV, CIV), a multisubunit enzyme composed of 14 subunits. The complex is composed of a catalytic core of 3 subunits MT-CO1, MT-CO2 and MT-CO3, encoded in the mitochondrial DNA, and 11 supernumerary subunits COX4I, COX5A, COX5B, COX6A, COX6B, COX6C, COX7A, COX7B, COX7C, COX8 and NDUFA4, which are encoded in the nuclear genome. The complex exists as a monomer or a dimer and forms supercomplexes (SCs) in the inner mitochondrial membrane with NADH-ubiquinone oxidoreductase (complex I, CI) and ubiquinol-cytochrome c oxidoreductase (cytochrome b-c1 complex, complex III, CIII), resulting in different assemblies (supercomplex SCI(1)III(2)IV(1) and megacomplex MCI(2)III(2)IV(2)).

Its subcellular location is the mitochondrion inner membrane. The catalysed reaction is 4 Fe(II)-[cytochrome c] + O2 + 8 H(+)(in) = 4 Fe(III)-[cytochrome c] + 2 H2O + 4 H(+)(out). Functionally, component of the cytochrome c oxidase, the last enzyme in the mitochondrial electron transport chain which drives oxidative phosphorylation. The respiratory chain contains 3 multisubunit complexes succinate dehydrogenase (complex II, CII), ubiquinol-cytochrome c oxidoreductase (cytochrome b-c1 complex, complex III, CIII) and cytochrome c oxidase (complex IV, CIV), that cooperate to transfer electrons derived from NADH and succinate to molecular oxygen, creating an electrochemical gradient over the inner membrane that drives transmembrane transport and the ATP synthase. Cytochrome c oxidase is the component of the respiratory chain that catalyzes the reduction of oxygen to water. Electrons originating from reduced cytochrome c in the intermembrane space (IMS) are transferred via the dinuclear copper A center (CU(A)) of subunit 2 and heme A of subunit 1 to the active site in subunit 1, a binuclear center (BNC) formed by heme A3 and copper B (CU(B)). The BNC reduces molecular oxygen to 2 water molecules using 4 electrons from cytochrome c in the IMS and 4 protons from the mitochondrial matrix. This Tragelaphus imberbis (Lesser kudu) protein is Cytochrome c oxidase subunit 3 (MT-CO3).